Reading from the N-terminus, the 94-residue chain is Co-chaperonin GroES (94 aa).

It belongs to the GroES chaperonin family. Heptamer of 7 subunits arranged in a ring. Interacts with the chaperonin GroEL.

It is found in the cytoplasm. In terms of biological role, together with the chaperonin GroEL, plays an essential role in assisting protein folding. The GroEL-GroES system forms a nano-cage that allows encapsulation of the non-native substrate proteins and provides a physical environment optimized to promote and accelerate protein folding. GroES binds to the apical surface of the GroEL ring, thereby capping the opening of the GroEL channel. The polypeptide is Co-chaperonin GroES (Staphylococcus carnosus (strain TM300)).